Here is a 163-residue protein sequence, read N- to C-terminus: Phosphopantetheine adenylyltransferase (163 aa).

Position 10 (serine 10) interacts with substrate. ATP contacts are provided by residues 10–11 and histidine 18; that span reads SF. Positions 42, 74, and 88 each coordinate substrate. Residues 89–91, glutamate 99, and 124–130 each bind ATP; these read GLR and YSFLSSS.

Belongs to the bacterial CoaD family. In terms of assembly, homohexamer. The cofactor is Mg(2+).

It localises to the cytoplasm. It carries out the reaction (R)-4'-phosphopantetheine + ATP + H(+) = 3'-dephospho-CoA + diphosphate. It functions in the pathway cofactor biosynthesis; coenzyme A biosynthesis; CoA from (R)-pantothenate: step 4/5. Functionally, reversibly transfers an adenylyl group from ATP to 4'-phosphopantetheine, yielding dephospho-CoA (dPCoA) and pyrophosphate. This chain is Phosphopantetheine adenylyltransferase, found in Bacillus cereus (strain G9842).